Consider the following 227-residue polypeptide: 7-cyano-7-deazaguanine synthase (227 aa).

11-21 (VSGGMDSAALL) is an ATP binding site. Cys192, Cys200, Cys203, and Cys206 together coordinate Zn(2+).

The protein belongs to the QueC family. Zn(2+) serves as cofactor.

It carries out the reaction 7-carboxy-7-deazaguanine + NH4(+) + ATP = 7-cyano-7-deazaguanine + ADP + phosphate + H2O + H(+). It participates in purine metabolism; 7-cyano-7-deazaguanine biosynthesis. Catalyzes the ATP-dependent conversion of 7-carboxy-7-deazaguanine (CDG) to 7-cyano-7-deazaguanine (preQ(0)). The protein is 7-cyano-7-deazaguanine synthase of Persephonella marina (strain DSM 14350 / EX-H1).